The chain runs to 254 residues: Protein orai-2 (254 aa).

4 consecutive transmembrane segments (helical) span residues 66–83, 94–114, 148–168, and 196–216; these read TSAL…EVQL, LIAF…ALLI, LAWG…VVLL, and AALV…VFTI.

The protein belongs to the Orai family. Oligomerizes in homomeric and heteromeric ORAI complexes. Native CRAC channels most likely consist of hexameric ORAI heteromers, implying that diverse ORAI1, ORAI2 and ORAI3 subunit combinations with distinct biophysical properties can operate in a cell-type specific way. Interacts with STIM1; this regulates channel activity. Interacts with CRACR2A/EFCAB4B.

Its subcellular location is the cell membrane. It carries out the reaction Ca(2+)(in) = Ca(2+)(out). CRAC channels are regulated by fast Ca(2+)-dependent inactivation (FCDI), a mechanism that limits Ca(2+) influx and cell toxicity. ORAI2 channels display prominent FCDI. Inhibited by lanthanides such as Gd(3+) ions. Its function is as follows. Pore-forming subunit of inward rectifying Ca(2+) release-activated Ca(2+) (CRAC) channels. Assembles with ORAI1 and ORAI3 to form hexameric CRAC channels that mediate Ca(2+) influx upon depletion of endoplasmic reticulum Ca(2+) store and channel activation by Ca(2+) sensor STIM1, a process known as store-operated Ca(2+) entry (SOCE). Various pore subunit combinations may account for distinct CRAC channel spatiotemporal and cell-type specific dynamics. ORAI1 mainly contributes to the generation of Ca(2+) plateaus involved in sustained Ca(2+) entry and is dispensable for cytosolic Ca(2+) oscillations, whereas ORAI2 and ORAI3 generate oscillatory patterns. CRAC channels assemble in Ca(2+) signaling microdomains where Ca(2+) influx is coupled to calmodulin and calcineurin signaling and activation of NFAT transcription factors recruited to ORAI1 via AKAP5. CRAC channels are the main pathway for Ca(2+) influx in T cells and promote the immune response to pathogens by activating NFAT-dependent cytokine and chemokine transcription. The protein is Protein orai-2 (ORAI2) of Homo sapiens (Human).